Reading from the N-terminus, the 350-residue chain is D-alanine--D-alanine ligase (350 aa).

Residues 135–335 (KLYAKNLGVK…LAQSLPKTPK (201 aa)) form the ATP-grasp domain. Position 164–219 (164–219 (KPSFNFPFIVKPNNAGSSLGVSVVKEEKELAYALDGAFEYSKEVLIEPFIQRVKEY)) interacts with ATP. Positions 291, 303, and 305 each coordinate Mg(2+).

It belongs to the D-alanine--D-alanine ligase family. Mg(2+) serves as cofactor. The cofactor is Mn(2+).

Its subcellular location is the cytoplasm. It carries out the reaction 2 D-alanine + ATP = D-alanyl-D-alanine + ADP + phosphate + H(+). It participates in cell wall biogenesis; peptidoglycan biosynthesis. Its function is as follows. Cell wall formation. This is D-alanine--D-alanine ligase from Helicobacter acinonychis (strain Sheeba).